The sequence spans 37 residues: Large ribosomal subunit protein bL36 (37 aa).

This sequence belongs to the bacterial ribosomal protein bL36 family.

This is Large ribosomal subunit protein bL36 from Hydrogenobaculum sp. (strain Y04AAS1).